The following is a 90-amino-acid chain: Probable Fe(2+)-trafficking protein (90 aa).

Belongs to the Fe(2+)-trafficking protein family.

Functionally, could be a mediator in iron transactions between iron acquisition and iron-requiring processes, such as synthesis and/or repair of Fe-S clusters in biosynthetic enzymes. This chain is Probable Fe(2+)-trafficking protein, found in Thioalkalivibrio sulfidiphilus (strain HL-EbGR7).